The following is a 202-amino-acid chain: Recombination protein RecR (202 aa).

The C4-type zinc finger occupies 57–72 (CGVCRTFTEQPCCDIC). The Toprim domain occupies 81 to 176 (GQICVVESPS…STTKIAHGVP (96 aa)).

The protein belongs to the RecR family.

In terms of biological role, may play a role in DNA repair. It seems to be involved in an RecBC-independent recombinational process of DNA repair. It may act with RecF and RecO. The protein is Recombination protein RecR of Hamiltonella defensa subsp. Acyrthosiphon pisum (strain 5AT).